An 812-amino-acid chain; its full sequence is DNA translocase FtsK 1 (812 aa).

Positions 1–11 (MTEKSHKKTAK) are enriched in basic residues. A disordered region spans residues 1 to 36 (MTEKSHKKTAKGRAGSPSPTSARNKKADNGARGNKV). Over residues 25–36 (KKADNGARGNKV) the composition is skewed to basic and acidic residues. Transmembrane regions (helical) follow at residues 63–83 (IGDA…ISLI), 116–136 (VGYY…CVML), 156–176 (IAAA…YFVL), 184–204 (LPVG…AWLL), and 210–230 (LLII…ISWL). Residues 231 to 812 (EFLNGAGRAV…RKILAHKDHL (582 aa)) are Cytoplasmic-facing. In terms of domain architecture, FtsK spans 461–670 (GTPVVGDLAK…FTVQSKIDSR (210 aa)). 481–486 (GSGKSV) is a binding site for ATP.

It belongs to the FtsK/SpoIIIE/SftA family. In terms of assembly, homohexamer. Forms a ring that surrounds DNA.

The protein localises to the cell inner membrane. Its function is as follows. Essential cell division protein that coordinates cell division and chromosome segregation. The N-terminus is involved in assembly of the cell-division machinery. The C-terminus functions as a DNA motor that moves dsDNA in an ATP-dependent manner towards the dif recombination site, which is located within the replication terminus region. Translocation stops specifically at Xer-dif sites, where FtsK interacts with the Xer recombinase, allowing activation of chromosome unlinking by recombination. FtsK orienting polar sequences (KOPS) guide the direction of DNA translocation. FtsK can remove proteins from DNA as it translocates, but translocation stops specifically at XerCD-dif site, thereby preventing removal of XerC and XerD from dif. This is DNA translocase FtsK 1 (ftsK1) from Neisseria meningitidis serogroup A / serotype 4A (strain DSM 15465 / Z2491).